Reading from the N-terminus, the 415-residue chain is Serine--tRNA ligase (415 aa).

231-233 lines the L-serine pocket; sequence TAE. 262-264 is an ATP binding site; sequence RSE. Glutamate 285 is an L-serine binding site. Residue 349 to 352 coordinates ATP; that stretch reads EISS. Serine 383 is a binding site for L-serine.

The protein belongs to the class-II aminoacyl-tRNA synthetase family. Type-1 seryl-tRNA synthetase subfamily. Homodimer. The tRNA molecule binds across the dimer.

Its subcellular location is the cytoplasm. It catalyses the reaction tRNA(Ser) + L-serine + ATP = L-seryl-tRNA(Ser) + AMP + diphosphate + H(+). The enzyme catalyses tRNA(Sec) + L-serine + ATP = L-seryl-tRNA(Sec) + AMP + diphosphate + H(+). It functions in the pathway aminoacyl-tRNA biosynthesis; selenocysteinyl-tRNA(Sec) biosynthesis; L-seryl-tRNA(Sec) from L-serine and tRNA(Sec): step 1/1. In terms of biological role, catalyzes the attachment of serine to tRNA(Ser). Is also able to aminoacylate tRNA(Sec) with serine, to form the misacylated tRNA L-seryl-tRNA(Sec), which will be further converted into selenocysteinyl-tRNA(Sec). The polypeptide is Serine--tRNA ligase (Helicobacter acinonychis (strain Sheeba)).